The primary structure comprises 134 residues: Ribosome-binding factor A (134 aa).

It belongs to the RbfA family. Monomer. Binds 30S ribosomal subunits, but not 50S ribosomal subunits or 70S ribosomes.

The protein resides in the cytoplasm. In terms of biological role, one of several proteins that assist in the late maturation steps of the functional core of the 30S ribosomal subunit. Associates with free 30S ribosomal subunits (but not with 30S subunits that are part of 70S ribosomes or polysomes). Required for efficient processing of 16S rRNA. May interact with the 5'-terminal helix region of 16S rRNA. The sequence is that of Ribosome-binding factor A from Bdellovibrio bacteriovorus (strain ATCC 15356 / DSM 50701 / NCIMB 9529 / HD100).